Here is a 148-residue protein sequence, read N- to C-terminus: Glutamyl-tRNA(Gln) amidotransferase subunit C, mitochondrial (148 aa).

Belongs to the GatC family. As to quaternary structure, subunit of the heterotrimeric GatCAB amidotransferase (AdT) complex, composed of A, B and C subunits.

Its subcellular location is the mitochondrion. The catalysed reaction is L-glutamyl-tRNA(Gln) + L-glutamine + ATP + H2O = L-glutaminyl-tRNA(Gln) + L-glutamate + ADP + phosphate + H(+). Its function is as follows. Allows the formation of correctly charged Gln-tRNA(Gln) through the transamidation of misacylated Glu-tRNA(Gln) in the mitochondria. The reaction takes place in the presence of glutamine and ATP through an activated gamma-phospho-Glu-tRNA(Gln). This Drosophila sechellia (Fruit fly) protein is Glutamyl-tRNA(Gln) amidotransferase subunit C, mitochondrial.